We begin with the raw amino-acid sequence, 732 residues long: Probable ATP-dependent RNA helicase DHX35 homolog (732 aa).

The segment at 1 to 50 (MSYHPGHGHRQEPRKGAGARRGFARPDDSADAPRTGPLIFEERSTENAGA) is disordered. A Helicase ATP-binding domain is found at 87 to 251 (LYMCERYRTI…FEMNETGNSD (165 aa)). ATP is bound at residue 100-107 (GETGCGKS). The DEAH box signature appears at 198–201 (DEAH). The Helicase C-terminal domain maps to 283-457 (AVDTVINIHK…STILQLKALG (175 aa)).

This sequence belongs to the DEAD box helicase family. DEAH subfamily.

The catalysed reaction is ATP + H2O = ADP + phosphate + H(+). In Caenorhabditis elegans, this protein is Probable ATP-dependent RNA helicase DHX35 homolog.